Consider the following 554-residue polypeptide: Urocanate hydratase (554 aa).

Residues 49 to 50 (GG), Gln-127, 173 to 175 (GMG), Glu-193, Arg-198, 239 to 240 (NA), 260 to 264 (QTSAH), 270 to 271 (YI), and Tyr-319 contribute to the NAD(+) site. The active site involves Cys-407. Gly-489 contributes to the NAD(+) binding site.

Belongs to the urocanase family. The cofactor is NAD(+).

Its subcellular location is the cytoplasm. The catalysed reaction is 4-imidazolone-5-propanoate = trans-urocanate + H2O. The protein operates within amino-acid degradation; L-histidine degradation into L-glutamate; N-formimidoyl-L-glutamate from L-histidine: step 2/3. Functionally, catalyzes the conversion of urocanate to 4-imidazolone-5-propionate. This Bacillus velezensis (strain DSM 23117 / BGSC 10A6 / LMG 26770 / FZB42) (Bacillus amyloliquefaciens subsp. plantarum) protein is Urocanate hydratase.